A 734-amino-acid polypeptide reads, in one-letter code: Photosystem I P700 chlorophyll a apoprotein A2 (734 aa).

Helical transmembrane passes span 46–69 (IFASHFGQLAIIFLWTSGNLFHVA), 135–158 (LYTGALFLLFLSAISLIAGWLHLQ), 175–199 (LNHHLSGLFGVSSLAWTGHLVHVAI), 273–291 (IAHHHLAIAFLFLVAGHMY), 330–353 (IHFQLGLALASLGVITSLVAQHMY), 369–395 (AALYTHHQYIAGFIMTGAFAHGAIFFI), 417–439 (AIISHLSWVSLFLGFHTLGLYVH), and 517–535 (FLVHHAIALGLHTTTLILV). [4Fe-4S] cluster-binding residues include Cys-559 and Cys-568. A run of 2 helical transmembrane segments spans residues 575 to 596 (AFYLAVFWMLNTIGWVTFYWHW) and 643 to 665 (LSVWAWMFLFGHLVWATGFMFLI). Chlorophyll a contacts are provided by His-654, Met-662, and Tyr-670. Trp-671 lines the phylloquinone pocket. A helical membrane pass occupies residues 707 to 727 (LVGLAHFSVGYIFTYAAFLIA).

Belongs to the PsaA/PsaB family. In terms of assembly, the PsaA/B heterodimer binds the P700 chlorophyll special pair and subsequent electron acceptors. PSI consists of a core antenna complex that captures photons, and an electron transfer chain that converts photonic excitation into a charge separation. The eukaryotic PSI reaction center is composed of at least 11 subunits. P700 is a chlorophyll a/chlorophyll a' dimer, A0 is one or more chlorophyll a, A1 is one or both phylloquinones and FX is a shared 4Fe-4S iron-sulfur center. serves as cofactor.

It is found in the plastid. Its subcellular location is the chloroplast thylakoid membrane. The catalysed reaction is reduced [plastocyanin] + hnu + oxidized [2Fe-2S]-[ferredoxin] = oxidized [plastocyanin] + reduced [2Fe-2S]-[ferredoxin]. Its function is as follows. PsaA and PsaB bind P700, the primary electron donor of photosystem I (PSI), as well as the electron acceptors A0, A1 and FX. PSI is a plastocyanin-ferredoxin oxidoreductase, converting photonic excitation into a charge separation, which transfers an electron from the donor P700 chlorophyll pair to the spectroscopically characterized acceptors A0, A1, FX, FA and FB in turn. Oxidized P700 is reduced on the lumenal side of the thylakoid membrane by plastocyanin. This is Photosystem I P700 chlorophyll a apoprotein A2 from Pelargonium hortorum (Common geranium).